The following is a 1572-amino-acid chain: E3 ubiquitin-protein ligase HECW2 (1572 aa).

The residue at position 48 (Ser48) is a Phosphoserine. The C2 domain maps to 167-301 (GAEGMEGGAS…QAIGDQMLSY (135 aa)). Disordered stretches follow at residues 341 to 452 (VNSV…SSFP) and 489 to 796 (IMFS…PSVR). Over residues 400–410 (TSTSSRTSPPR) the composition is skewed to low complexity. A compositionally biased stretch (basic and acidic residues) spans 518–532 (ASTHEAASFEDKPEN). Composition is skewed to polar residues over residues 572–588 (EVDQ…SDAS), 597–614 (ETES…SSET), 643–664 (SSCN…SSLE), and 688–703 (PTSS…SVCT). The tract at residues 737-1068 (WQRRGSLEGA…PRPSSTFNTV (332 aa)) is interaction with TP73. Over residues 744–776 (EGAAAAAESPPQEEGSAGEAQGTCEGATAQEEG) the composition is skewed to low complexity. A WW 1 domain is found at 807 to 840 (EALPPNWEARIDSHGRIFYVDHVNRTTTWQRPTA). The stretch at 847 to 874 (LQRSNSIQQMEQLNRRYQSIRRTMTNER) forms a coiled coil. Residues Ser852 and Ser909 each carry the phosphoserine modification. The WW 2 domain occupies 985–1018 (LELPRGWEMKHDHQGKAFFVDHNSRTTTFIDPRL). Disordered stretches follow at residues 1024–1069 (RPTS…NTVS) and 1161–1187 (CQSP…RAPA). Positions 1031 to 1040 (HRQHLTRQRS) are enriched in basic residues. Residues 1161 to 1181 (CQSPRGSPVSSPQNSPGTQRA) show a composition bias toward polar residues. Ser1175 is modified (phosphoserine). The HECT domain maps to 1237–1572 (SRKDLQRNKL…VEETSTFGLE (336 aa)). Cys1540 serves as the catalytic Glycyl thioester intermediate.

In terms of assembly, interacts with TP73. Interacts with FZR1. Ubiquitinated and degraded during mitotic exit by APC/C-Cdh1. Predominantly expressed in adult brain, lung and heart.

It is found in the cytoplasm. The protein localises to the cytoskeleton. It localises to the spindle. The enzyme catalyses S-ubiquitinyl-[E2 ubiquitin-conjugating enzyme]-L-cysteine + [acceptor protein]-L-lysine = [E2 ubiquitin-conjugating enzyme]-L-cysteine + N(6)-ubiquitinyl-[acceptor protein]-L-lysine.. The protein operates within protein modification; protein ubiquitination. In terms of biological role, E3 ubiquitin-protein ligase that mediates ubiquitination of TP73. Acts to stabilize TP73 and enhance activation of transcription by TP73. Involved in the regulation of mitotic metaphase/anaphase transition. The sequence is that of E3 ubiquitin-protein ligase HECW2 (HECW2) from Homo sapiens (Human).